The chain runs to 98 residues: Phosphoribosyl-ATP pyrophosphatase (98 aa).

This sequence belongs to the PRA-PH family.

Its subcellular location is the cytoplasm. The catalysed reaction is 1-(5-phospho-beta-D-ribosyl)-ATP + H2O = 1-(5-phospho-beta-D-ribosyl)-5'-AMP + diphosphate + H(+). It participates in amino-acid biosynthesis; L-histidine biosynthesis; L-histidine from 5-phospho-alpha-D-ribose 1-diphosphate: step 2/9. This is Phosphoribosyl-ATP pyrophosphatase from Pelotomaculum thermopropionicum (strain DSM 13744 / JCM 10971 / SI).